Consider the following 1070-residue polypeptide: DNA-directed RNA polymerase subunit beta (1070 aa).

Belongs to the RNA polymerase beta chain family. As to quaternary structure, in plastids the minimal PEP RNA polymerase catalytic core is composed of four subunits: alpha, beta, beta', and beta''. When a (nuclear-encoded) sigma factor is associated with the core the holoenzyme is formed, which can initiate transcription.

The protein resides in the plastid. It localises to the chloroplast. The enzyme catalyses RNA(n) + a ribonucleoside 5'-triphosphate = RNA(n+1) + diphosphate. Functionally, DNA-dependent RNA polymerase catalyzes the transcription of DNA into RNA using the four ribonucleoside triphosphates as substrates. The protein is DNA-directed RNA polymerase subunit beta of Gossypium hirsutum (Upland cotton).